Reading from the N-terminus, the 244-residue chain is Lipid A 1-phosphatase (244 aa).

6 helical membrane-spanning segments follow: residues 28-48 (LFVT…PIGA), 60-80 (ELLT…LLFF), 98-118 (ALYV…SGLL), 154-174 (FPSG…LLFP), 178-198 (VAFI…GAHY), and 201-221 (DVIA…IVFA).

Belongs to the lipid A LpxE 1-phosphatase family.

The protein resides in the cell inner membrane. The protein operates within bacterial outer membrane biogenesis; LPS lipid A biosynthesis. Its function is as follows. Removes the 1-phosphate group from (tetraacyl) lipid A species, has no requirement for the Kdo(2) moiety of lipid A. Has no 4'-phosphatase activity. Reduces sensitivity of S.meliloti strain 1021 to the cationic antimicrobial peptide (CAMP) polymyxin B. This is Lipid A 1-phosphatase from Rhizobium johnstonii (strain DSM 114642 / LMG 32736 / 3841) (Rhizobium leguminosarum bv. viciae).